A 198-amino-acid polypeptide reads, in one-letter code: Glycerol-3-phosphate acyltransferase (198 aa).

6 helical membrane passes run 5 to 25 (YLII…SIAI), 55 to 75 (VGLA…YLGF), 79 to 99 (GSLG…LPVL), 114 to 134 (VLLF…LIVV), 139 to 159 (YVSL…LIYI), and 164 to 184 (YIGL…RSNI).

Belongs to the PlsY family. In terms of assembly, probably interacts with PlsX.

It localises to the cell membrane. The catalysed reaction is an acyl phosphate + sn-glycerol 3-phosphate = a 1-acyl-sn-glycero-3-phosphate + phosphate. Its pathway is lipid metabolism; phospholipid metabolism. Catalyzes the transfer of an acyl group from acyl-phosphate (acyl-PO(4)) to glycerol-3-phosphate (G3P) to form lysophosphatidic acid (LPA). This enzyme utilizes acyl-phosphate as fatty acyl donor, but not acyl-CoA or acyl-ACP. In Finegoldia magna (strain ATCC 29328 / DSM 20472 / WAL 2508) (Peptostreptococcus magnus), this protein is Glycerol-3-phosphate acyltransferase.